A 906-amino-acid polypeptide reads, in one-letter code: Transmembrane channel-like protein 2 (906 aa).

Residues Met-1–Glu-150 are disordered. The Cytoplasmic portion of the chain corresponds to Met-1–Asn-263. Basic residues predominate over residues Pro-69–His-79. The segment covering Arg-80 to Ser-127 has biased composition (basic and acidic residues). Residues Ser-135–Ser-147 are compositionally biased toward low complexity. The helical transmembrane segment at Leu-264 to Pro-284 threads the bilayer. The Extracellular portion of the chain corresponds to Tyr-285–Arg-336. Residues Leu-337–Ile-357 traverse the membrane as a helical segment. Topologically, residues Arg-358–Val-431 are cytoplasmic. The chain crosses the membrane as a helical span at residues Leu-432–Val-452. Topologically, residues Lys-453 to Arg-508 are extracellular. A helical transmembrane segment spans residues Ile-509–His-529. At Leu-530 to Asn-693 the chain is on the cytoplasmic side. Residues Phe-694–Ile-714 form a helical membrane-spanning segment. The Extracellular portion of the chain corresponds to Met-715 to Lys-750. A helical membrane pass occupies residues Ile-751–Ala-771. Topologically, residues Ile-772–His-906 are cytoplasmic. Positions Glu-800 to His-906 are disordered. Composition is skewed to polar residues over residues Lys-820 to Ala-846, Pro-854 to Pro-866, and Ala-886 to Ser-900.

Belongs to the TMC family. Forms the MET channel composed of TMC dimer (TMC1 or TMC2), TMIE, TOMT, CIB (CIB2 or CIB3), LHFPL5 and PDH15. The interaction of TMC1 and TMC2 with TOMT is required for the transportation of TMC1/2 into the stereocilia of hair cells. Interacts (via N-terminus) with both isoforms CD1 and CD3 of PCDH15. Can form a heterodimer with TMC1, TMC5 or TMC7. Detected in fetal cochlea.

It localises to the cell membrane. The catalysed reaction is Ca(2+)(in) = Ca(2+)(out). Functionally, pore-forming subunit of the mechanotransducer (MET) non-selective cation channel complex located at the tips of stereocilia of cochlear hair cells and that mediates sensory transduction in the auditory system. The MET complex is composed of two dimeric pore-forming ion-conducting transmembrane TMC (TMC1 or TMC2) subunits, and aided by several auxiliary proteins including LHFPL5, TMIE, CIB2/3 and TOMT, and the tip-link PCDH15. MET channel is activated by tension in the tip-link extending from the side wall of one stereocilium to the tip of the adjacent shorter stereocilium, where the channel is located. TMC2 MET channel is highly permeable to calcium and likely transports monovalent cations. Also involved in vestibular hair cell transduction current of the mammalian inner ear. This chain is Transmembrane channel-like protein 2, found in Homo sapiens (Human).